The sequence spans 368 residues: Nicotinamide/nicotinic acid mononucleotide adenylyltransferase (368 aa).

Positions Met-1–Pro-14 are enriched in polar residues. The disordered stretch occupies residues Met-1–Ser-25. Ser-36 bears the Phosphoserine mark. A disordered region spans residues Ala-47 to Lys-78. Residues Arg-61–Pro-72 are compositionally biased toward polar residues. 2 positions are modified to phosphoserine: Ser-75 and Ser-85. Residues Ser-135 and Phe-136 each contribute to the NAD(+) site. Residue His-143 participates in ATP binding. Positions 215, 250, 252, 263, 282, and 313 each coordinate NAD(+). Thr-318 to Arg-321 provides a ligand contact to ATP.

This sequence belongs to the eukaryotic NMN adenylyltransferase family. A divalent metal cation serves as cofactor.

Its subcellular location is the cytoplasm. It localises to the nucleus. It catalyses the reaction beta-nicotinamide D-ribonucleotide + ATP + H(+) = diphosphate + NAD(+). The catalysed reaction is nicotinate beta-D-ribonucleotide + ATP + H(+) = deamido-NAD(+) + diphosphate. The protein operates within cofactor biosynthesis; NAD(+) biosynthesis; deamido-NAD(+) from nicotinate D-ribonucleotide: step 1/1. It functions in the pathway cofactor biosynthesis; NAD(+) biosynthesis; NAD(+) from nicotinamide D-ribonucleotide: step 1/1. Catalyzes the formation of NAD(+) from nicotinamide mononucleotide (NMN) and ATP. Can also use the deamidated form; nicotinic acid mononucleotide (NaMN) as substrate to form deamido-NAD(+) (NaAD). Key enzyme in both de novo and salvage pathways for NAD(+) biosynthesis. In Schizosaccharomyces pombe (strain 972 / ATCC 24843) (Fission yeast), this protein is Nicotinamide/nicotinic acid mononucleotide adenylyltransferase.